Here is a 528-residue protein sequence, read N- to C-terminus: Cytochrome P450 1A5 (528 aa).

Cys-467 is a binding site for heme.

The protein belongs to the cytochrome P450 family. It depends on heme as a cofactor.

The protein localises to the endoplasmic reticulum membrane. It is found in the microsome membrane. It catalyses the reaction an organic molecule + reduced [NADPH--hemoprotein reductase] + O2 = an alcohol + oxidized [NADPH--hemoprotein reductase] + H2O + H(+). Functionally, cytochromes P450 are a group of heme-thiolate monooxygenases. In liver microsomes, this enzyme is involved in an NADPH-dependent electron transport pathway. It oxidizes a variety of structurally unrelated compounds, including steroids, fatty acids, and xenobiotics. The sequence is that of Cytochrome P450 1A5 (CYP1A5) from Gallus gallus (Chicken).